A 388-amino-acid chain; its full sequence is Protein DVU_0534 (388 aa).

The next 10 helical transmembrane spans lie at 10-31 (LMTPGNIITGIILVMGLVLTVL), 57-78 (LLCGVALAAGGYVTSASCYLFG), 89-106 (AITTAFLGYFFVVVALNY), 130-144 (EVGLCVATYLTVLFV), 166-191 (LTLVLTIFGVVLSTLHQSSLGALFLI), 199-222 (LWYSSFLPVFFFISSMVAGLSMVI), 254-265 (AASFVLAGYFMI), 291-306 (MLGFVALPSFLYALGV), 316-328 (FASVLGVLGIVMN), and 354-368 (IGISVFIVTSIITVY).

Belongs to the NrfD family.

The protein localises to the cell membrane. Functionally, HMWC (high-molecular-weight cytochrome c), ORF2, ORF3, ORF4, ORF5 and ORF6 in the HMC operon form a transmembrane protein complex that allows electron flow from the periplasmic hydrogenase to the cytoplasmic enzymes that catalyze reduction of sulfates. This is Protein DVU_0534 from Nitratidesulfovibrio vulgaris (strain ATCC 29579 / DSM 644 / CCUG 34227 / NCIMB 8303 / VKM B-1760 / Hildenborough) (Desulfovibrio vulgaris).